The chain runs to 325 residues: Transaldolase (325 aa).

The active-site Schiff-base intermediate with substrate is Lys-125.

The protein belongs to the transaldolase family. Type 2 subfamily.

Its subcellular location is the cytoplasm. It carries out the reaction D-sedoheptulose 7-phosphate + D-glyceraldehyde 3-phosphate = D-erythrose 4-phosphate + beta-D-fructose 6-phosphate. The protein operates within carbohydrate degradation; pentose phosphate pathway; D-glyceraldehyde 3-phosphate and beta-D-fructose 6-phosphate from D-ribose 5-phosphate and D-xylulose 5-phosphate (non-oxidative stage): step 2/3. Functionally, transaldolase is important for the balance of metabolites in the pentose-phosphate pathway. This chain is Transaldolase, found in Campylobacter jejuni subsp. jejuni serotype O:6 (strain 81116 / NCTC 11828).